The primary structure comprises 596 residues: DNA mismatch repair protein MutL (596 aa).

The protein belongs to the DNA mismatch repair MutL/HexB family.

This protein is involved in the repair of mismatches in DNA. It is required for dam-dependent methyl-directed DNA mismatch repair. May act as a 'molecular matchmaker', a protein that promotes the formation of a stable complex between two or more DNA-binding proteins in an ATP-dependent manner without itself being part of a final effector complex. This chain is DNA mismatch repair protein MutL, found in Leptospira borgpetersenii serovar Hardjo-bovis (strain JB197).